Consider the following 152-residue polypeptide: Lipoprotein signal peptidase (152 aa).

The next 2 membrane-spanning stretches (helical) occupy residues 55 to 75 (NKMWFFYIITVVFVAFIVFYM) and 85 to 105 (LGISLGLILGGAIGNFIDRVF). Residues aspartate 111 and aspartate 129 contribute to the active site. The helical transmembrane segment at 124–144 (VFNIADSALCIGVVLIIIQTL) threads the bilayer.

It belongs to the peptidase A8 family.

It localises to the cell membrane. The catalysed reaction is Release of signal peptides from bacterial membrane prolipoproteins. Hydrolyzes -Xaa-Yaa-Zaa-|-(S,diacylglyceryl)Cys-, in which Xaa is hydrophobic (preferably Leu), and Yaa (Ala or Ser) and Zaa (Gly or Ala) have small, neutral side chains.. Its pathway is protein modification; lipoprotein biosynthesis (signal peptide cleavage). Its function is as follows. This protein specifically catalyzes the removal of signal peptides from prolipoproteins. The sequence is that of Lipoprotein signal peptidase from Bacillus cereus (strain AH187).